Here is a 359-residue protein sequence, read N- to C-terminus: WW domain-binding protein wbp-11 (359 aa).

Disordered regions lie at residues 1–38 (MPSISKTKSGERYRAPTDQARKMDRKKENKRNKKDRQQ), 235–264 (PSSYNSMPTRMPHHHHHHHPHASSHYNPMG), and 317–341 (PGDNKTIVPRQAAPVQRRPEVQKQA). Positions 8–27 (KSGERYRAPTDQARKMDRKK) are enriched in basic and acidic residues. Basic residues predominate over residues 245 to 256 (MPHHHHHHHPHA).

Functionally, activates pre-mRNA splicing. May inhibit PP1 phosphatase activity. The chain is WW domain-binding protein wbp-11 from Caenorhabditis elegans.